Consider the following 414-residue polypeptide: Histidine--tRNA ligase (414 aa).

Belongs to the class-II aminoacyl-tRNA synthetase family. As to quaternary structure, homodimer.

It localises to the cytoplasm. The catalysed reaction is tRNA(His) + L-histidine + ATP = L-histidyl-tRNA(His) + AMP + diphosphate + H(+). In Mycoplasma pneumoniae (strain ATCC 29342 / M129 / Subtype 1) (Mycoplasmoides pneumoniae), this protein is Histidine--tRNA ligase (hisS).